The primary structure comprises 264 residues: MTPDSSPSSVDDPLFESGHRIFANKDLLKIGHVPEADRIVGRDEEISKLAKRLNGAVHGYSPENVMIYGKTGTGKSLVSKHVCQRAQNAAQDGVEIGTAYIDCAEDNTETQAISSLAAKLNNESSTGISVPHTGLSTSKYYKLLWKTLDAQFDSVIIILDEIDLMNDDSVLMKLSRAEEAGKIDCSVGVIAISNKIQYVDNVNERVKSSFQHKELFFKPYDANQLREIMFNREDFSSSTTTYSISWPGWTASSCSRARFKAATF.

ATP-binding positions include 73 to 77 (TGKSL), Tyr-220, and Arg-232.

This sequence belongs to the CDC6/cdc18 family.

In terms of biological role, involved in regulation of DNA replication. The protein is ORC1-type DNA replication protein 2 (orc2) of Halobacterium salinarum (strain ATCC 700922 / JCM 11081 / NRC-1) (Halobacterium halobium).